The sequence spans 246 residues: 1-(5-phosphoribosyl)-5-[(5-phosphoribosylamino)methylideneamino] imidazole-4-carboxamide isomerase (246 aa).

Catalysis depends on Asp-10, which acts as the Proton acceptor. Residue Asp-131 is the Proton donor of the active site.

The protein belongs to the HisA/HisF family.

The protein resides in the cytoplasm. It carries out the reaction 1-(5-phospho-beta-D-ribosyl)-5-[(5-phospho-beta-D-ribosylamino)methylideneamino]imidazole-4-carboxamide = 5-[(5-phospho-1-deoxy-D-ribulos-1-ylimino)methylamino]-1-(5-phospho-beta-D-ribosyl)imidazole-4-carboxamide. Its pathway is amino-acid biosynthesis; L-histidine biosynthesis; L-histidine from 5-phospho-alpha-D-ribose 1-diphosphate: step 4/9. The chain is 1-(5-phosphoribosyl)-5-[(5-phosphoribosylamino)methylideneamino] imidazole-4-carboxamide isomerase from Acidiphilium cryptum (strain JF-5).